Here is a 61-residue protein sequence, read N- to C-terminus: Small ribosomal subunit protein uS14 (61 aa).

Positions 24, 27, 40, and 43 each coordinate Zn(2+).

Belongs to the universal ribosomal protein uS14 family. Zinc-binding uS14 subfamily. Part of the 30S ribosomal subunit. Contacts proteins S3 and S10. Requires Zn(2+) as cofactor.

Functionally, binds 16S rRNA, required for the assembly of 30S particles and may also be responsible for determining the conformation of the 16S rRNA at the A site. The polypeptide is Small ribosomal subunit protein uS14 (Thermosipho melanesiensis (strain DSM 12029 / CIP 104789 / BI429)).